The chain runs to 156 residues: Putative increased recombination centers protein 11 (156 aa).

Residues 20-42 (AALGATCLLHYLTTSLSIRFFFH) traverse the membrane as a helical segment.

It is found in the membrane. The protein is Putative increased recombination centers protein 11 (IRC11) of Saccharomyces cerevisiae (strain ATCC 204508 / S288c) (Baker's yeast).